The following is a 692-amino-acid chain: Glycine--tRNA ligase beta subunit (692 aa).

This sequence belongs to the class-II aminoacyl-tRNA synthetase family. As to quaternary structure, tetramer of two alpha and two beta subunits.

The protein localises to the cytoplasm. The enzyme catalyses tRNA(Gly) + glycine + ATP = glycyl-tRNA(Gly) + AMP + diphosphate. The chain is Glycine--tRNA ligase beta subunit from Limosilactobacillus fermentum (strain NBRC 3956 / LMG 18251) (Lactobacillus fermentum).